The sequence spans 505 residues: Catalase (505 aa).

Residues His56 and Asn129 contribute to the active site. Tyr339 serves as a coordination point for heme.

The protein belongs to the catalase family. Heme is required as a cofactor.

It is found in the cytoplasm. It carries out the reaction 2 H2O2 = O2 + 2 H2O. Functionally, decomposes hydrogen peroxide into water and oxygen; serves to protect cells from the toxic effects of hydrogen peroxide. The protein is Catalase (katA) of Helicobacter pylori (strain J99 / ATCC 700824) (Campylobacter pylori J99).